A 209-amino-acid polypeptide reads, in one-letter code: Uracil phosphoribosyltransferase (209 aa).

Residues R79, R104, and 131 to 139 each bind 5-phospho-alpha-D-ribose 1-diphosphate; that span reads DPMLATGGS. Residues I194 and 199–201 contribute to the uracil site; that span reads GDA. D200 contributes to the 5-phospho-alpha-D-ribose 1-diphosphate binding site.

Belongs to the UPRTase family. The cofactor is Mg(2+).

The catalysed reaction is UMP + diphosphate = 5-phospho-alpha-D-ribose 1-diphosphate + uracil. Its pathway is pyrimidine metabolism; UMP biosynthesis via salvage pathway; UMP from uracil: step 1/1. Its activity is regulated as follows. Allosterically activated by GTP. Catalyzes the conversion of uracil and 5-phospho-alpha-D-ribose 1-diphosphate (PRPP) to UMP and diphosphate. This chain is Uracil phosphoribosyltransferase, found in Streptococcus mutans serotype c (strain ATCC 700610 / UA159).